The primary structure comprises 205 residues: Guanylate kinase (205 aa).

A Guanylate kinase-like domain is found at 6 to 185 (GLLIVLSGPS…ACERIKAIVV (180 aa)). Position 13–20 (13–20 (GPSGVGKG)) interacts with ATP.

This sequence belongs to the guanylate kinase family.

The protein localises to the cytoplasm. It carries out the reaction GMP + ATP = GDP + ADP. Functionally, essential for recycling GMP and indirectly, cGMP. The protein is Guanylate kinase of Bacillus anthracis.